The primary structure comprises 603 residues: Elongation factor 4 (603 aa).

Positions 9 to 191 (SNIRNFSIIA…RIVRQIPPPK (183 aa)) constitute a tr-type G domain. Residues 21-26 (DHGKST) and 138-141 (NKID) each bind GTP.

It belongs to the TRAFAC class translation factor GTPase superfamily. Classic translation factor GTPase family. LepA subfamily.

The protein localises to the cell inner membrane. The enzyme catalyses GTP + H2O = GDP + phosphate + H(+). Required for accurate and efficient protein synthesis under certain stress conditions. May act as a fidelity factor of the translation reaction, by catalyzing a one-codon backward translocation of tRNAs on improperly translocated ribosomes. Back-translocation proceeds from a post-translocation (POST) complex to a pre-translocation (PRE) complex, thus giving elongation factor G a second chance to translocate the tRNAs correctly. Binds to ribosomes in a GTP-dependent manner. The protein is Elongation factor 4 of Idiomarina loihiensis (strain ATCC BAA-735 / DSM 15497 / L2-TR).